The chain runs to 215 residues: Cytochrome b6 (215 aa).

The helical transmembrane segment at 32–52 (IFHCLGGITLTCFLVQVATGF) threads the bilayer. Residue cysteine 35 coordinates heme c. Residues histidine 86 and histidine 100 each contribute to the heme b site. Transmembrane regions (helical) follow at residues 90-110 (ASMM…TGGF), 116-136 (LTWV…VTGY), and 186-206 (LHTF…FPMI). Positions 187 and 202 each coordinate heme b.

Belongs to the cytochrome b family. PetB subfamily. In terms of assembly, the 4 large subunits of the cytochrome b6-f complex are cytochrome b6, subunit IV (17 kDa polypeptide, PetD), cytochrome f and the Rieske protein, while the 4 small subunits are PetG, PetL, PetM and PetN. The complex functions as a dimer. The cofactor is heme b. It depends on heme c as a cofactor.

It localises to the plastid. The protein resides in the chloroplast thylakoid membrane. Functionally, component of the cytochrome b6-f complex, which mediates electron transfer between photosystem II (PSII) and photosystem I (PSI), cyclic electron flow around PSI, and state transitions. This is Cytochrome b6 from Amborella trichopoda.